The following is a 500-amino-acid chain: Lysine--tRNA ligase (500 aa).

Residues Glu-410 and Glu-417 each coordinate Mg(2+).

This sequence belongs to the class-II aminoacyl-tRNA synthetase family. As to quaternary structure, homodimer. It depends on Mg(2+) as a cofactor.

It is found in the cytoplasm. The enzyme catalyses tRNA(Lys) + L-lysine + ATP = L-lysyl-tRNA(Lys) + AMP + diphosphate. The polypeptide is Lysine--tRNA ligase (Shewanella putrefaciens (strain CN-32 / ATCC BAA-453)).